The following is a 117-amino-acid chain: Large ribosomal subunit protein bL20 (117 aa).

The protein belongs to the bacterial ribosomal protein bL20 family.

Functionally, binds directly to 23S ribosomal RNA and is necessary for the in vitro assembly process of the 50S ribosomal subunit. It is not involved in the protein synthesizing functions of that subunit. The chain is Large ribosomal subunit protein bL20 from Vibrio atlanticus (strain LGP32) (Vibrio splendidus (strain Mel32)).